The sequence spans 221 residues: Leucine rich adaptor protein 1-like (221 aa).

Met-1 is subject to N-acetylmethionine. The disordered stretch occupies residues 1 to 81 (MEDGPLPDLR…SGSPRRSHPS (81 aa)). Composition is skewed to basic and acidic residues over residues 8-21 (DLRD…RKVP) and 28-39 (LRGEEPAPREGA). Residues 48-75 (SCSSSSSCSSFAPSVSSSSSSSPASGSP) show a composition bias toward low complexity.

This is Leucine rich adaptor protein 1-like (Lurap1l) from Rattus norvegicus (Rat).